Reading from the N-terminus, the 357-residue chain is 3-dehydroquinate synthase (357 aa).

Residues 126-127 (TT), lysine 139, and lysine 148 contribute to the NAD(+) site. Glutamate 181, histidine 244, and histidine 261 together coordinate Zn(2+).

The protein belongs to the sugar phosphate cyclases superfamily. Dehydroquinate synthase family. Co(2+) is required as a cofactor. It depends on Zn(2+) as a cofactor. Requires NAD(+) as cofactor.

It is found in the cytoplasm. The catalysed reaction is 7-phospho-2-dehydro-3-deoxy-D-arabino-heptonate = 3-dehydroquinate + phosphate. Its pathway is metabolic intermediate biosynthesis; chorismate biosynthesis; chorismate from D-erythrose 4-phosphate and phosphoenolpyruvate: step 2/7. In terms of biological role, catalyzes the conversion of 3-deoxy-D-arabino-heptulosonate 7-phosphate (DAHP) to dehydroquinate (DHQ). This is 3-dehydroquinate synthase from Solibacter usitatus (strain Ellin6076).